A 165-amino-acid polypeptide reads, in one-letter code: Interferon gamma (165 aa).

A signal peptide spans 1 to 23; sequence MKYTSYILAFQLCIVLGSLGCYC. Glutamine 24 carries the post-translational modification Pyrrolidone carboxylic acid. N-linked (GlcNAc...) asparagine glycans are attached at residues asparagine 48 and asparagine 120.

The protein belongs to the type II (or gamma) interferon family. In terms of assembly, homodimer. Interacts with IFNGR1 (via extracellular domain); this interaction promotes IFNGR1 dimerization. In terms of tissue distribution, released primarily from activated T lymphocytes.

The protein localises to the secreted. Type II interferon produced by immune cells such as T-cells and NK cells that plays crucial roles in antimicrobial, antiviral, and antitumor responses by activating effector immune cells and enhancing antigen presentation. Primarily signals through the JAK-STAT pathway after interaction with its receptor IFNGR1 to affect gene regulation. Upon IFNG binding, IFNGR1 intracellular domain opens out to allow association of downstream signaling components JAK2, JAK1 and STAT1, leading to STAT1 activation, nuclear translocation and transcription of IFNG-regulated genes. Many of the induced genes are transcription factors such as IRF1 that are able to further drive regulation of a next wave of transcription. Plays a role in class I antigen presentation pathway by inducing a replacement of catalytic proteasome subunits with immunoproteasome subunits. In turn, increases the quantity, quality, and repertoire of peptides for class I MHC loading. Increases the efficiency of peptide generation also by inducing the expression of activator PA28 that associates with the proteasome and alters its proteolytic cleavage preference. Up-regulates as well MHC II complexes on the cell surface by promoting expression of several key molecules such as cathepsins B/CTSB, H/CTSH, and L/CTSL. Participates in the regulation of hematopoietic stem cells during development and under homeostatic conditions by affecting their development, quiescence, and differentiation. The chain is Interferon gamma (IFNG) from Cercocebus atys (Sooty mangabey).